Here is a 291-residue protein sequence, read N- to C-terminus: Pyridoxal 5'-phosphate synthase subunit PdxS (291 aa).

Asp-23 is a D-ribose 5-phosphate binding site. Lys-80 serves as the catalytic Schiff-base intermediate with D-ribose 5-phosphate. Gly-152 is a binding site for D-ribose 5-phosphate. Arg-164 provides a ligand contact to D-glyceraldehyde 3-phosphate. D-ribose 5-phosphate-binding positions include Gly-213 and 234-235; that span reads GS.

This sequence belongs to the PdxS/SNZ family. In terms of assembly, in the presence of PdxT, forms a dodecamer of heterodimers.

The enzyme catalyses aldehydo-D-ribose 5-phosphate + D-glyceraldehyde 3-phosphate + L-glutamine = pyridoxal 5'-phosphate + L-glutamate + phosphate + 3 H2O + H(+). It functions in the pathway cofactor biosynthesis; pyridoxal 5'-phosphate biosynthesis. Its function is as follows. Catalyzes the formation of pyridoxal 5'-phosphate from ribose 5-phosphate (RBP), glyceraldehyde 3-phosphate (G3P) and ammonia. The ammonia is provided by the PdxT subunit. Can also use ribulose 5-phosphate and dihydroxyacetone phosphate as substrates, resulting from enzyme-catalyzed isomerization of RBP and G3P, respectively. This chain is Pyridoxal 5'-phosphate synthase subunit PdxS, found in Desulfitobacterium hafniense (strain DSM 10664 / DCB-2).